The primary structure comprises 72 residues: Delta-actitoxin-Avd2b 3 (72 aa).

The N-terminal stretch at 1 to 21 (MMSRLLVFLMLGAAFMLVVSA) is a signal peptide. A propeptide spanning residues 22–42 (NDAYGDEPAFKDLNQGDESLG) is cleaved from the precursor. Intrachain disulfides connect Cys47–Cys62, Cys48–Cys56, and Cys50–Cys67.

Belongs to the sea anemone short toxin (type III) family.

Its subcellular location is the secreted. It localises to the nematocyst. Voltage-gated sodium channel (Nav) inhibitor. 1 uM completely inhibits insect voltage-gated sodium channel inactivation (DmNav1 from D.melanogaster). The sequence is that of Delta-actitoxin-Avd2b 3 from Anemonia viridis (Snakelocks anemone).